Consider the following 338-residue polypeptide: MTTTLVSATIFDLSEVLCKGNKMLNYSTPSAGGCLLDRKAVGTPAGGGFPRRHSVTLPSSKFHQNQLLSSLKGEPAPTLSSRDSRFRDRSFSEGGERLLPTQKQPGSGQVNSSRYKTELCRPFEENGACKYGDKCQFAHGIHELRSLTRHPKYKTELCRTFHTIGFCPYGPRCHFIHNAEERRALAGGRDLSADRPRLQHSFSFAGFPSAAATAAATGLLDSPTSITPPPILSADDLLGSPTLPDGTNNPFAFSSQELASLFAPSMGLPGGGSPTTFLFRPMSESPHMFDSPPSPQDSLSDHEGYLSSSSSSHSGSDSPTLDNSRRLPIFSRLSISDD.

The segment at 1–111 is necessary and sufficient for the association with mRNA decay enzymes and mRNA decay activation; sequence MTTTLVSATI…QKQPGSGQVN (111 aa). Serine 54 carries the phosphoserine; by MAPKAPK2 modification. Serine 90 bears the Phosphoserine; by PKB/AKT1 mark. A Phosphoserine; by PKB/AKT1 and MAPKAPK2 modification is found at serine 92. The tract at residues 93–113 is disordered; the sequence is EGGERLLPTQKQPGSGQVNSS. A compositionally biased stretch (polar residues) spans 101 to 113; the sequence is TQKQPGSGQVNSS. 2 consecutive C3H1-type zinc fingers follow at residues 114 to 142 and 152 to 180; these read RYKT…HGIH and KYKT…HNAE. Residues 185–338 are necessary for mRNA decay activation; sequence LAGGRDLSAD…IFSRLSISDD (154 aa). The residue at position 203 (serine 203) is a Phosphoserine; by PKB/AKT1 and MAPKAPK2. A disordered region spans residues 273 to 338; that stretch reads SPTTFLFRPM…IFSRLSISDD (66 aa). The segment covering 305–318 has biased composition (low complexity); the sequence is YLSSSSSSHSGSDS. A Phosphoserine modification is found at serine 318. Serine 334 is modified (phosphoserine; by RPS6KA1).

As to quaternary structure, associates with the cytoplasmic CCR4-NOT deadenylase and RNA exosome complexes to trigger ARE-containing mRNA deadenylation and decay processes. Interacts with CNOT1. Interacts (via N-terminus) with CNOT6. Interacts with CNOT7; this interaction is inhibited in response to phorbol 12-myristate 13-acetate (PMA) treatment in a p38 MAPK-dependent manner. Interacts with DCP1A. Interacts (via N-terminus) with DCP2. Interacts (via N-terminus) with EXOSC2. Interacts with XRN1. Interacts (via phosphorylated form) with YWHAB; this interaction occurs in a protein kinase AKT1-dependent manner. Interacts (via phosphorylated form) with YWHAZ; this interaction occurs in a p38 MAPK- and AKT-signaling pathways. In terms of processing, phosphorylated. Phosphorylated by RPS6KA1 at Ser-334 upon phorbol 12-myristate 13-acetate (PMA) treatment; this phosphorylation results in dissociation of the CCR4-NOT deadenylase complex and induces p38 MAPK-mediated stabilization of the low-density lipoprotein receptor LDLR mRNA. Phosphorylated by protein kinase AKT1 at Ser-92 and Ser-203 in response to insulin; these phosphorylations stabilize ZFP36L1, increase the association with 14-3-3 proteins and mediate ARE-containing mRNA stabilization. AKT1-mediated phosphorylation at Ser-92 does not impair ARE-containing RNA-binding. Phosphorylated at Ser-54, Ser-92 and Ser-203 by MAPKAPK2; these phosphorylations increase the association with 14-3-3 proteins and mediate ARE-containing mRNA stabilization in a protein kinase AKT1-independent manner. MAPKAPK2-mediated phosphorylations at Ser-54, Ser-92 and Ser-203 do not impair ARE-containing RNA-binding. Phosphorylations increase the association with 14-3-3 proteins and mediate ARE-containing mRNA stabilization during early adipogenesis in a p38 MAPK- and AKT-dependent manner. Phosphorylated by protein kinase AKT1 at Ser-92. Ubiquitinated. Ubiquitination leads to proteasomal degradation, a process inhibited by phosphorylations at Ser-90, Ser-92 and Ser-203.

Its subcellular location is the nucleus. It is found in the cytoplasm. The protein resides in the cytoplasmic granule. It localises to the P-body. In terms of biological role, zinc-finger RNA-binding protein that destabilizes several cytoplasmic AU-rich element (ARE)-containing mRNA transcripts by promoting their poly(A) tail removal or deadenylation, and hence provide a mechanism for attenuating protein synthesis. Acts as a 3'-untranslated region (UTR) ARE mRNA-binding adapter protein to communicate signaling events to the mRNA decay machinery. Functions by recruiting the CCR4-NOT deadenylase complex and components of the cytoplasmic RNA decay machinery to the bound ARE-containing mRNAs, and hence promotes ARE-mediated mRNA deadenylation and decay processes. Also induces the degradation of ARE-containing mRNAs even in absence of poly(A) tail. Binds to 3'-UTR ARE of numerous mRNAs. Positively regulates early adipogenesis by promoting ARE-mediated mRNA decay of immediate early genes (IEGs). Promotes ARE-mediated mRNA decay of mineralocorticoid receptor NR3C2 mRNA in response to hypertonic stress. Negatively regulates hematopoietic/erythroid cell differentiation by promoting ARE-mediated mRNA decay of the transcription factor STAT5B mRNA. Positively regulates monocyte/macrophage cell differentiation by promoting ARE-mediated mRNA decay of the cyclin-dependent kinase CDK6 mRNA. Promotes degradation of ARE-containing pluripotency-associated mRNAs in embryonic stem cells (ESCs), such as NANOG, through a fibroblast growth factor (FGF)-induced MAPK-dependent signaling pathway, and hence attenuates ESC self-renewal and positively regulates mesendoderm differentiation. May play a role in mediating pro-apoptotic effects in malignant B-cells by promoting ARE-mediated mRNA decay of BCL2 mRNA. In association with ZFP36L2 maintains quiescence on developing B lymphocytes by promoting ARE-mediated decay of several mRNAs encoding cell cycle regulators that help B cells progress through the cell cycle, and hence ensuring accurate variable-diversity-joining (VDJ) recombination and functional immune cell formation. Together with ZFP36L2 is also necessary for thymocyte development and prevention of T-cell acute lymphoblastic leukemia (T-ALL) transformation by promoting ARE-mediated mRNA decay of the oncogenic transcription factor NOTCH1 mRNA. Participates in the delivery of target ARE-mRNAs to processing bodies (PBs). In addition to its cytosolic mRNA-decay function, plays a role in the regulation of nuclear mRNA 3'-end processing; modulates mRNA 3'-end maturation efficiency of the DLL4 mRNA through binding with an ARE embedded in a weak noncanonical polyadenylation (poly(A)) signal in endothelial cells. Also involved in the regulation of stress granule (SG) and P-body (PB) formation and fusion. Plays a role in vasculogenesis and endocardial development. Plays a role in the regulation of keratinocyte proliferation, differentiation and apoptosis. Plays a role in myoblast cell differentiation. The sequence is that of mRNA decay activator protein ZFP36L1 from Rattus norvegicus (Rat).